The sequence spans 181 residues: Translationally-controlled tumor protein homolog (181 aa).

Residues 1–181 enclose the TCTP domain; sequence MLIFKDAFTD…VKEALIEEKQ (181 aa).

Belongs to the TCTP family.

The protein resides in the cytoplasm. Involved in calcium binding and microtubule stabilization. This Brugia malayi (Filarial nematode worm) protein is Translationally-controlled tumor protein homolog.